A 286-amino-acid chain; its full sequence is Probable aquaporin PIP-type pTOM75 (286 aa).

Positions 1-35 are disordered; the sequence is MAENKEEDVKLGANKFRETQPLGTAAQTDKDYKEP. Residues 1–55 are Cytoplasmic-facing; the sequence is MAENKEEDVKLGANKFRETQPLGTAAQTDKDYKEPPPAPLFEPGELSSWSFYRAG. The span at 7–18 shows a compositional bias: basic and acidic residues; that stretch reads EDVKLGANKFRE. The chain crosses the membrane as a helical span at residues 56-76; the sequence is IAEFMATFLFLYITILTVMGL. At 77 to 89 the chain is on the extracellular side; the sequence is KRSDSLCSSVGIQ. A helical transmembrane segment spans residues 90 to 110; that stretch reads GVAWAFGGMIFALVYCTAGIS. At 111-133 the chain is on the cytoplasmic side; it reads GGHINPAVTFGLFLARKLSLTRA. Positions 115–117 match the NPA 1 motif; it reads NPA. The chain crosses the membrane as a helical span at residues 134–154; the sequence is VFYMVMQCLGAICGAGVVKGF. Residues 155–175 are Extracellular-facing; that stretch reads MVGPYQRLGGGANVVNPGYTK. The helical transmembrane segment at 176–196 threads the bilayer; it reads GDGLGAEIIGTFVLVYTVFSA. Residues 197-209 are Cytoplasmic-facing; that stretch reads TDAKRNARDSHVP. The chain crosses the membrane as a helical span at residues 210 to 230; the sequence is ILAPLPIGFAVFLVHLATIPI. The Extracellular portion of the chain corresponds to 231 to 257; it reads TGTGINPARSLGAAIIYNDEHAWNDHW. Positions 236–238 match the NPA 2 motif; sequence NPA. Residues 258 to 278 traverse the membrane as a helical segment; the sequence is IFWVGPMIGAALAAIYHQIII. The Cytoplasmic segment spans residues 279–286; the sequence is RAMPFHRS.

This sequence belongs to the MIP/aquaporin (TC 1.A.8) family. PIP (TC 1.A.8.11) subfamily. As to expression, roots, ripening fruit and senescing leaves.

It localises to the cell membrane. Its function is as follows. Aquaporins facilitate the transport of water and small neutral solutes across cell membranes. The protein is Probable aquaporin PIP-type pTOM75 of Solanum lycopersicum (Tomato).